Here is a 334-residue protein sequence, read N- to C-terminus: Inositol 2-dehydrogenase (334 aa).

It belongs to the Gfo/Idh/MocA family. Homotetramer.

The enzyme catalyses myo-inositol + NAD(+) = scyllo-inosose + NADH + H(+). Its function is as follows. Involved in the oxidation of myo-inositol (MI) to 2-keto-myo-inositol (2KMI or 2-inosose). The protein is Inositol 2-dehydrogenase of Cereibacter sphaeroides (strain ATCC 17029 / ATH 2.4.9) (Rhodobacter sphaeroides).